The primary structure comprises 432 residues: Adenylosuccinate synthetase (432 aa).

GTP is bound by residues 12–18 (GDEGKGK) and 40–42 (GHT). The active-site Proton acceptor is D13. D13 and G40 together coordinate Mg(2+). IMP is bound by residues 13 to 16 (DEGK), 38 to 41 (NAGH), T132, R146, Q226, T241, and R305. H41 serves as the catalytic Proton donor. 301–307 (TVTGRKR) is a binding site for substrate. GTP-binding positions include R307, 333-335 (KLD), and 415-417 (STS).

This sequence belongs to the adenylosuccinate synthetase family. In terms of assembly, homodimer. Mg(2+) is required as a cofactor.

It localises to the cytoplasm. The enzyme catalyses IMP + L-aspartate + GTP = N(6)-(1,2-dicarboxyethyl)-AMP + GDP + phosphate + 2 H(+). The protein operates within purine metabolism; AMP biosynthesis via de novo pathway; AMP from IMP: step 1/2. In terms of biological role, plays an important role in the de novo pathway of purine nucleotide biosynthesis. Catalyzes the first committed step in the biosynthesis of AMP from IMP. This is Adenylosuccinate synthetase from Chelativorans sp. (strain BNC1).